The chain runs to 86 residues: Progonadoliberin IIB (86 aa).

The N-terminal stretch at 1 to 24 (MVHICRLFVVMGMLMFLSVQFASS) is a signal peptide. A Pyrrolidone carboxylic acid modification is found at Gln-25. Position 34 is a glycine amide (Gly-34).

This sequence belongs to the GnRH family. In terms of tissue distribution, olfactory bulbs, hypothalamus and telencephalon, midbrain and posterior brain areas.

It is found in the secreted. In terms of biological role, stimulates the secretion of gonadotropins. In Carassius auratus (Goldfish), this protein is Progonadoliberin IIB (gnrh2b).